The chain runs to 431 residues: Glucose-1-phosphate adenylyltransferase (431 aa).

Alpha-D-glucose 1-phosphate contacts are provided by residues Y108, G174, 189-190 (EK), and S207.

Belongs to the bacterial/plant glucose-1-phosphate adenylyltransferase family. In terms of assembly, homotetramer.

The catalysed reaction is alpha-D-glucose 1-phosphate + ATP + H(+) = ADP-alpha-D-glucose + diphosphate. The protein operates within glycan biosynthesis; glycogen biosynthesis. In terms of biological role, involved in the biosynthesis of ADP-glucose, a building block required for the elongation reactions to produce glycogen. Catalyzes the reaction between ATP and alpha-D-glucose 1-phosphate (G1P) to produce pyrophosphate and ADP-Glc. The sequence is that of Glucose-1-phosphate adenylyltransferase from Actinobacillus succinogenes (strain ATCC 55618 / DSM 22257 / CCUG 43843 / 130Z).